Consider the following 507-residue polypeptide: Serine/threonine-protein kinase BSK11 (507 aa).

Glycine 2 carries the N-myristoyl glycine lipid modification. The span at 16–26 (DKKITSDDLSG) shows a compositional bias: basic and acidic residues. The disordered stretch occupies residues 16-44 (DKKITSDDLSGRRGKGAKRGNRHRHANIN). Positions 27-41 (RRGKGAKRGNRHRHA) are enriched in basic residues. One can recognise a Protein kinase domain in the interval 75 to 332 (NAVVSVCSDQ…GDIISVITTL (258 aa)). Residues 81–89 (CSDQEPNLV) and lysine 106 contribute to the ATP site. Aspartate 200 functions as the Proton acceptor in the catalytic mechanism.

It belongs to the protein kinase superfamily. Ser/Thr protein kinase family. As to quaternary structure, interacts with BRI1, ASK7/BIN2, BSK1, BSK6 and BSK8. In terms of processing, phosphorylated by BRI1, ASK7/BIN2 and ASK9/BIL2.

It localises to the cell membrane. The catalysed reaction is L-seryl-[protein] + ATP = O-phospho-L-seryl-[protein] + ADP + H(+). It catalyses the reaction L-threonyl-[protein] + ATP = O-phospho-L-threonyl-[protein] + ADP + H(+). Its function is as follows. Probable serine/threonine kinase that acts as a positive regulator of brassinosteroid (BR) signaling downstream of the receptor kinase BRI1. This Arabidopsis thaliana (Mouse-ear cress) protein is Serine/threonine-protein kinase BSK11.